The chain runs to 248 residues: Tryptophan synthase alpha chain (248 aa).

Active-site proton acceptor residues include Glu36 and Asp47.

It belongs to the TrpA family. In terms of assembly, tetramer of two alpha and two beta chains.

The catalysed reaction is (1S,2R)-1-C-(indol-3-yl)glycerol 3-phosphate + L-serine = D-glyceraldehyde 3-phosphate + L-tryptophan + H2O. Its pathway is amino-acid biosynthesis; L-tryptophan biosynthesis; L-tryptophan from chorismate: step 5/5. Functionally, the alpha subunit is responsible for the aldol cleavage of indoleglycerol phosphate to indole and glyceraldehyde 3-phosphate. The chain is Tryptophan synthase alpha chain from Pyrococcus abyssi (strain GE5 / Orsay).